A 579-amino-acid polypeptide reads, in one-letter code: Thiol:disulfide interchange protein DsbD (579 aa).

The N-terminal stretch at 1 to 16 (MKKLFLFFTLIFTAFA) is a signal peptide. 2 cysteine pairs are disulfide-bonded: Cys-124/Cys-129 and Cys-193/Cys-315. The next 8 helical transmembrane spans lie at 178–198 (IFGF…LPML), 230–250 (LTYT…QIAL), 254–274 (YVMI…FGLF), 296–316 (GAFG…SPCT), 337–357 (AATL…ITLF), 376–396 (FGFV…PEVW), 397–417 (EPRL…LQMS), and 420–440 (GFGY…VQPL). The region spanning 449-579 (TTTQSAVENK…AFSNWLKALH (131 aa)) is the Thioredoxin domain. A disulfide bridge connects residues Cys-495 and Cys-498.

The protein belongs to the thioredoxin family. DsbD subfamily.

It is found in the cell inner membrane. It catalyses the reaction [protein]-dithiol + NAD(+) = [protein]-disulfide + NADH + H(+). The enzyme catalyses [protein]-dithiol + NADP(+) = [protein]-disulfide + NADPH + H(+). Its function is as follows. Required to facilitate the formation of correct disulfide bonds in some periplasmic proteins and for the assembly of the periplasmic c-type cytochromes. Acts by transferring electrons from cytoplasmic thioredoxin to the periplasm. This transfer involves a cascade of disulfide bond formation and reduction steps. This chain is Thiol:disulfide interchange protein DsbD, found in Haemophilus influenzae (strain PittEE).